The sequence spans 471 residues: MVNIVDSGSKHAPQEMEQFLPGEGKVMYKIQPRKSDTEQALAGNDFDPFALRDNPHPTTDNETLTHLLKASLGTGILGMPFAFMCSGLIMGIFSTIFTAFICTHCSYVLVKCGHKLYYRTRRTKMTFAEIAEAAFQKGPKWCRGFAPVAKFSILFGLFLTYFGTCSVYTVIVASNFEQLISYWTGTAVSLRMLICIMLVPLILIAWVPNLKYLAPVSMVANVFMGLGLGITFYYLVQDLPPVEERESVVWSTLPQFFSITIFAMEAIGVVMPLENNMKTPQSFLGICGVLSQGMSGVTLIYMLLGFLGYLRYGSATGESITLNLPIEEWPAQTVKVLISLAVYCTFGLQFFVCLEIIWDGIKEKCKKRPTLVNYVLRTVLVTAAVVLAVAVPTIGPFMGLIGAFCFSILGLIFPVVIELIVHWESGFGKYNWILWKNAIITLCGIGALVFGTQAAIKDIVKAYSNNENVGE.

N-linked (GlcNAc...) asparagine glycosylation occurs at N61. Helical transmembrane passes span 81 to 101 (FAFM…TAFI), 153 to 173 (ILFG…VIVA), 187 to 207 (AVSL…IAWV), 216 to 236 (VSMV…YYLV), 253 to 273 (LPQF…VMPL), 283 to 303 (FLGI…IYML), 337 to 357 (LISL…LEII), 375 to 395 (VLRT…PTIG), 397 to 417 (FMGL…PVVI), and 432 to 452 (WILW…VFGT).

Belongs to the amino acid/polyamine transporter 2 family. As to expression, in third instar larvae, expressed at highest levels in the brain and digestive system with particularly high levels in surface glia of the brain (at protein level). In third instar larvae, expressed in all cells of the body wall (at protein level). Within the body wall of third instar larvae, most highly expressed in epithelial cells and sensory neurons. Expressed at a similar level in all da neurons (at protein level). Widely expressed during embryonic and late larval stages. Levels are highly dynamic in embryogenesis with surges of expression in many structures, including muscle primordia, salivary glands, proventriculus, trachea and gonads. Expressed in all or most cells of larval imaginal disks. Expression is also particularly strong in the pouch and hinge regions of the wing disk and in the morphogenetic furrow of the eye disk.

It localises to the cell membrane. It is found in the lysosome membrane. The protein resides in the late endosome membrane. The protein localises to the cell projection. Its subcellular location is the axon. It localises to the dendrite. It is found in the perikaryon. The protein resides in the cytoplasm. Functionally, amino acid transporter which has pH-dependent electrogenic transport activity for alanine and glycine but not for proline. Plays a role in positive regulation of growth by directly or indirectly modulating the effects of the TOR signaling pathway. Required in a cell-autonomous manner for dendrite growth in neurons with large dendrite arbors. The protein is Proton-coupled amino acid transporter-like protein pathetic of Drosophila melanogaster (Fruit fly).